Consider the following 237-residue polypeptide: tRNA1(Val) (adenine(37)-N6)-methyltransferase (237 aa).

The protein belongs to the methyltransferase superfamily. tRNA (adenine-N(6)-)-methyltransferase family.

The protein localises to the cytoplasm. It carries out the reaction adenosine(37) in tRNA1(Val) + S-adenosyl-L-methionine = N(6)-methyladenosine(37) in tRNA1(Val) + S-adenosyl-L-homocysteine + H(+). Specifically methylates the adenine in position 37 of tRNA(1)(Val) (anticodon cmo5UAC). This chain is tRNA1(Val) (adenine(37)-N6)-methyltransferase, found in Parabacteroides distasonis (strain ATCC 8503 / DSM 20701 / CIP 104284 / JCM 5825 / NCTC 11152).